Here is a 231-residue protein sequence, read N- to C-terminus: MTDPIIIAIDGHSSCGKSTMAKDLARAIGYIYVDTGAMYRAVTLYSIRRGLWKDGVLDTETLRNEMSDVRITFRLNAETGLPETYLNGENVEQDIRSMEVSAKVSPIATLDFVREAMVREQQAMGKSKGIVMDGRDIGTTVFPEAEMKIFVTALPHVRAQRRLDELRAKGDATTTFDDVLANIEERDRIDSTRAVSPLRQAEDALVLDNSHMTIPQQKAWLLERFQEVTGS.

11 to 19 (GHSSCGKST) contributes to the ATP binding site.

Belongs to the cytidylate kinase family. Type 1 subfamily.

It localises to the cytoplasm. The catalysed reaction is CMP + ATP = CDP + ADP. It carries out the reaction dCMP + ATP = dCDP + ADP. The protein is Cytidylate kinase of Porphyromonas gingivalis (strain ATCC BAA-308 / W83).